A 602-amino-acid polypeptide reads, in one-letter code: Glutaminase liver isoform, mitochondrial (602 aa).

A mitochondrion-targeting transit peptide spans 1–14; that stretch reads MRSMRALQNALSRA. Disordered stretches follow at residues 1–29 and 45–66; these read MRSMRALQNALSRAGSHGRRGGWGHPSRG and AQGRGTPHSHQPQHSDHDASHS. Substrate is bound at residue S219. K253 is subject to N6-succinyllysine. Residue N268 coordinates substrate. Residues K279 and K284 each carry the N6-acetyllysine modification. Residues E314 and N321 each coordinate substrate. K329 carries the post-translational modification N6-acetyllysine. 3 residues coordinate substrate: Y347, Y399, and V417. ANK repeat units follow at residues 518–551 and 552–585; these read DSRTALHVAAAEGHIEVVKFLIEACKVNPFVKDR and WGNIPLDDAVQFNHLEVVKLLQDYHDSYLLSETQ.

This sequence belongs to the glutaminase family. As to quaternary structure, homotetramer, dimer of dimers. Does not assemble into higher oligomers. Interacts with the PDZ domain of the syntrophin SNTA1. Interacts with the PDZ domain of TAX1BP3.

The protein localises to the mitochondrion. It catalyses the reaction L-glutamine + H2O = L-glutamate + NH4(+). Its activity is regulated as follows. Enzyme activity is not stimulated by phosphate. Phosphate increases kcat, but decreases substrate affinity, resulting in unchanged enzyme activity. Its function is as follows. Plays an important role in the regulation of glutamine catabolism. Promotes mitochondrial respiration and increases ATP generation in cells by catalyzing the synthesis of glutamate and alpha-ketoglutarate. Increases cellular anti-oxidant function via NADH and glutathione production. May play a role in preventing tumor proliferation. This is Glutaminase liver isoform, mitochondrial (Gls2) from Mus musculus (Mouse).